The chain runs to 94 residues: Acylphosphatase (94 aa).

Residues 8 to 94 enclose the Acylphosphatase-like domain; that stretch reads ALHVIVKGRV…RGYTDFRIEV (87 aa). Active-site residues include R23 and N41.

Belongs to the acylphosphatase family.

The catalysed reaction is an acyl phosphate + H2O = a carboxylate + phosphate + H(+). The sequence is that of Acylphosphatase (acyP) from Treponema denticola (strain ATCC 35405 / DSM 14222 / CIP 103919 / JCM 8153 / KCTC 15104).